The sequence spans 110 residues: Iron-sulfur cluster assembly protein CyaY (110 aa).

Belongs to the frataxin family.

In terms of biological role, involved in iron-sulfur (Fe-S) cluster assembly. May act as a regulator of Fe-S biogenesis. The chain is Iron-sulfur cluster assembly protein CyaY from Pseudomonas putida (strain GB-1).